A 468-amino-acid polypeptide reads, in one-letter code: Membrane-associated tyrosine- and threonine-specific cdc2-inhibitory kinase wee-1.1 (468 aa).

A compositionally biased stretch (basic and acidic residues) spans Ser25 to Thr42. The segment at Ser25–Leu63 is disordered. Residues Asn49 to Lys61 show a composition bias toward basic residues. One can recognise a Protein kinase domain in the interval Phe106–Lys357. Residues Leu112 to Val120 and Lys135 each bind ATP. Residue Asp224 is the Proton acceptor of the active site. 2 residues coordinate Mg(2+): Asn229 and Asp242. Residues Glu425 to Pro453 form a disordered region.

It belongs to the protein kinase superfamily. Ser/Thr protein kinase family. WEE1 subfamily. In the 12-13-cell embryo, expressed in the E blastomere. In the 16-cell embryo, expressed in the eight AB cells.

Its subcellular location is the nucleus. It catalyses the reaction L-seryl-[protein] + ATP = O-phospho-L-seryl-[protein] + ADP + H(+). It carries out the reaction L-threonyl-[protein] + ATP = O-phospho-L-threonyl-[protein] + ADP + H(+). Functionally, acts as a negative regulator of entry into mitosis (G2 to M transition) by phosphorylation of the CDK1 kinase. This Caenorhabditis elegans protein is Membrane-associated tyrosine- and threonine-specific cdc2-inhibitory kinase wee-1.1 (wee-1.1).